The following is a 443-amino-acid chain: Porin D (443 aa).

Residues 1 to 23 form the signal peptide; it reads MKVMKWSAIALAVSAGSTQFAVA. Catalysis depends on residues histidine 179, aspartate 231, and serine 319.

It belongs to the outer membrane porin (Opr) (TC 1.B.25) family.

The protein resides in the cell outer membrane. Its function is as follows. Porin with a specificity for basic amino acids. Involved in facilitated diffusion of carbapenem beta-lactam antibiotics, such as imipenem and meropenem. Also possesses serine protease activity. This Pseudomonas aeruginosa (strain ATCC 15692 / DSM 22644 / CIP 104116 / JCM 14847 / LMG 12228 / 1C / PRS 101 / PAO1) protein is Porin D (oprD).